Consider the following 250-residue polypeptide: 6-phosphogluconate dehydrogenase, decarboxylating (250 aa).

Residues Lys29 and Arg56 each coordinate substrate. At Lys77 the chain carries N6-acetyllysine. Positions 214 and 220 each coordinate substrate. An NADP(+)-binding site is contributed by 245-248; that stretch reads SSSY.

It belongs to the 6-phosphogluconate dehydrogenase family. In terms of assembly, homodimer.

The protein localises to the cytoplasm. The enzyme catalyses 6-phospho-D-gluconate + NADP(+) = D-ribulose 5-phosphate + CO2 + NADPH. The protein operates within carbohydrate degradation; pentose phosphate pathway; D-ribulose 5-phosphate from D-glucose 6-phosphate (oxidative stage): step 3/3. Catalyzes the oxidative decarboxylation of 6-phosphogluconate to ribulose 5-phosphate and CO(2), with concomitant reduction of NADP to NADPH. The sequence is that of 6-phosphogluconate dehydrogenase, decarboxylating (PGD) from Sus scrofa (Pig).